The primary structure comprises 400 residues: Protein phyllopod (400 aa).

Positions 109–127 are interaction with sina; the sequence is QERTKLRPVAMVRPTVRVQ. A disordered region spans residues 125–145; sequence RVQPQSQPQLQPQVPINPTPA. The segment covering 127-138 has biased composition (low complexity); that stretch reads QPQSQPQLQPQV. Positions 241–320 are interaction with ttk; it reads YQRFPQPSVD…TAISEVLPTA (80 aa). The stretch at 319–362 forms a coiled coil; the sequence is TARYQVTHEENKENQQAQEMELELEEEEEVDGRAELEVVQEAEA. The interval 346-382 is disordered; the sequence is EEVDGRAELEVVQEAEAPLEPQSHHKQGNSHQNSHQA.

Component of some E3 complex at least composed of sina, ebi and phyl, required for the degradation of ttk. In terms of tissue distribution, in embryos, it is ubiquitously present before cellularization. During stages 9-11, it is expressed in neuroblasts and the SOP cells. From stage 12 onward, it decreases, but remains in a subset of PNS cells at stages 12-14. Weakly expressed in wing imaginal disks, in the SOP cells of wing margin bristles, notal macrochaetes, and other sensory organs. In leg disks, it is expressed in the precursors of the femoral chordotonal organs, as well as in external sensory SOP cells. Strongly expressed in the eye-antenna disk, it is specifically expressed in R1, R6 and R7 cells, and not in R3, R3, R4, R5 and R8 cells.

It localises to the nucleus. Functionally, essential adapter component of E3 ubiquitin ligase complexes; involved in R7 photoreceptor cell differentiation, embryonic nervous system, external sensory organ development and specification of particular muscles. E3 ubiquitin ligase complexes mediate ubiquitination and subsequent proteasomal degradation of target proteins. Required for specification of R7 photoreceptor cell fate in the eye by participating in the ubiquitination and subsequent proteasomal degradation of Tramtrack (ttk), a general inhibitor of photoreceptor differentiation. Acts downstream of Notch signaling to specify the fate of the SOP (sensory organ precursor) cells and their progeny, probably via the sina-mediated proteasomal degradation of ttk. Its restricted pattern of expression, upon Notch and Ras signaling pathways, suggests that it acts as a key determinant in E3 complexes to trigger protein proteolysis in appropriate cells. This chain is Protein phyllopod (phyl), found in Drosophila melanogaster (Fruit fly).